The following is a 230-amino-acid chain: MARKLSKNVKNAKAQVNKTDVFSLLEAIELAKKISFAKFDESLDIAINLNLDTRKSDQQLRGAVALPHGTGKNVKVLVATDEVSAQKAAKDAGADYVYTAAELPEVLNQDKYDFDVIVADPKMMLVLGKYGKKLGPKGLMPNPKTGTVTTNPAKAVEELKKGKANYRADKGGIIHASVGKKSMDSQKLVENAETLIQTIKRLKPTTVKGTYVLNITVSTSMGPSIKVKID.

It belongs to the universal ribosomal protein uL1 family. Part of the 50S ribosomal subunit.

In terms of biological role, binds directly to 23S rRNA. The L1 stalk is quite mobile in the ribosome, and is involved in E site tRNA release. Its function is as follows. Protein L1 is also a translational repressor protein, it controls the translation of the L11 operon by binding to its mRNA. This is Large ribosomal subunit protein uL1 from Metamycoplasma arthritidis (strain 158L3-1) (Mycoplasma arthritidis).